The sequence spans 155 residues: Crossover junction endodeoxyribonuclease RuvC (155 aa).

Active-site residues include Asp7, Glu68, and Asp140. Positions 7, 68, and 140 each coordinate Mg(2+).

The protein belongs to the RuvC family. In terms of assembly, homodimer which binds Holliday junction (HJ) DNA. The HJ becomes 2-fold symmetrical on binding to RuvC with unstacked arms; it has a different conformation from HJ DNA in complex with RuvA. In the full resolvosome a probable DNA-RuvA(4)-RuvB(12)-RuvC(2) complex forms which resolves the HJ. Mg(2+) is required as a cofactor.

The protein resides in the cytoplasm. The enzyme catalyses Endonucleolytic cleavage at a junction such as a reciprocal single-stranded crossover between two homologous DNA duplexes (Holliday junction).. Its function is as follows. The RuvA-RuvB-RuvC complex processes Holliday junction (HJ) DNA during genetic recombination and DNA repair. Endonuclease that resolves HJ intermediates. Cleaves cruciform DNA by making single-stranded nicks across the HJ at symmetrical positions within the homologous arms, yielding a 5'-phosphate and a 3'-hydroxyl group; requires a central core of homology in the junction. The consensus cleavage sequence is 5'-(A/T)TT(C/G)-3'. Cleavage occurs on the 3'-side of the TT dinucleotide at the point of strand exchange. HJ branch migration catalyzed by RuvA-RuvB allows RuvC to scan DNA until it finds its consensus sequence, where it cleaves and resolves the cruciform DNA. In Prochlorococcus marinus (strain SARG / CCMP1375 / SS120), this protein is Crossover junction endodeoxyribonuclease RuvC.